The chain runs to 120 residues: HTH-type transcriptional regulator MerD (120 aa).

The region spanning 3–72 (AYTVSQLAHN…LDALARLCRA (70 aa)) is the HTH merR-type domain. The segment at residues 6 to 25 (VSQLAHNAGVSVHIVRDYLV) is a DNA-binding region (H-T-H motif).

This is HTH-type transcriptional regulator MerD (merD) from Shigella flexneri.